Consider the following 937-residue polypeptide: PNGFVKFIRSIFGYRKTSLTLFVILTYVAVLLLAYLDHSLYYSVDLPTSHKEQELLHQAWVDLQHIAKYEHAYGSSGNDYVHDYLESRIVSAVAHKSYVEYDNDLNYTNNIMFGSRSELSGNSFNSVSYYESNNLVVRINGTDETLPALLLSAHFDSVPSSFGVTDDGMGIASLLGVLYYYTGKSTARPRRTIVLNFNNDEEFGLYGATSFLSHPWATGVHYFLNLEGTGAGGKAILFRGTDYGITKYFKGVRYPYGTSIFQQGFNNHLIHSETDYKIYKEKGGLRGLDVAFYKPRDLYHTAGDNIKNIDIKSLWHMLSNALDFTAIVTKGKIDLDADSLDSESSKSNTDTAVYTSFLNFFFAFPTSQVVVASILLLVLIPGISIPFLIIIFGYKKNWELSFVNVTKFPISLAISAALLNLFTNGFIVPFNQFLPNSSPFALVAILFATFLLLNYLILNGINLIFVSYKIVNHDEKLISIIETSFLYWVVLIYSTAKLANNVIGDDHSGEFPIIFLCALQAVASIFGLIGWSFKPVPKEHYVVVPQEEAEPLLGSSDNFNYGSPDVEDDRLVSDGSYDWSIQFLTIVPISTYLIYNSGFLVVDGINKSIQESLISQNLIYKLLQTFAISLSIPLLPFIFKVNRLFVLALFLISTIGVLFVATADSFNVANPLKLRFIQYIDLDKSAQDSFVSVIGREASPLQFVLSDIPSVKDSKGAVACVPTRDGLQDCSYKSSLDPKLVPGAKSFDDYLKVDILKNSSSNVDYPFGLLTGEIRIRVPKNRECVLDFKPSESTKIVSPFKDSPVKTVIVYKGKKSATTKEVEAESIPEGFSKDKDGNYVYKDLVGIDQLQLNKLDWDKSYHVGFQWVPNFSDVDINMKKSATNKLNVSVKCFWAELGKGEESTIPAYEELLHYSPNYVSWANSAKGLVSVSKTVEL.

Residues 1 to 16 are Cytoplasmic-facing; sequence PNGFVKFIRSIFGYRK. Residues 17–37 form a helical membrane-spanning segment; the sequence is TSLTLFVILTYVAVLLLAYLD. Residues 38–373 are Vacuolar-facing; it reads HSLYYSVDLP…FPTSQVVVAS (336 aa). N-linked (GlcNAc...) asparagine glycosylation is found at N106 and N140. Zn(2+) is bound by residues H154 and D166. E201 acts as the Proton acceptor in catalysis. The Zn(2+) site is built by E202, E227, and H300. The helical transmembrane segment at 374–394 threads the bilayer; sequence ILLLVLIPGISIPFLIIIFGY. Over 395–407 the chain is Cytoplasmic; it reads KKNWELSFVNVTK. Residues 408-428 traverse the membrane as a helical segment; that stretch reads FPISLAISAALLNLFTNGFIV. At 429–437 the chain is on the vacuolar side; it reads PFNQFLPNS. A helical transmembrane segment spans residues 438 to 458; sequence SPFALVAILFATFLLLNYLIL. Residues 459 to 475 lie on the Cytoplasmic side of the membrane; the sequence is NGINLIFVSYKIVNHDE. A helical membrane pass occupies residues 476–496; that stretch reads KLISIIETSFLYWVVLIYSTA. The Vacuolar segment spans residues 497 to 510; sequence KLANNVIGDDHSGE. A helical transmembrane segment spans residues 511–531; sequence FPIIFLCALQAVASIFGLIGW. The Cytoplasmic segment spans residues 532–580; sequence SFKPVPKEHYVVVPQEEAEPLLGSSDNFNYGSPDVEDDRLVSDGSYDWS. A helical transmembrane segment spans residues 581–601; sequence IQFLTIVPISTYLIYNSGFLV. The Vacuolar portion of the chain corresponds to 602–618; that stretch reads VDGINKSIQESLISQNL. N606 is a glycosylation site (N-linked (GlcNAc...) asparagine). A helical membrane pass occupies residues 619–639; the sequence is IYKLLQTFAISLSIPLLPFIF. Residues 640 to 643 are Cytoplasmic-facing; sequence KVNR. A helical transmembrane segment spans residues 644-664; sequence LFVLALFLISTIGVLFVATAD. The Vacuolar portion of the chain corresponds to 665 to 937; it reads SFNVANPLKL…LVSVSKTVEL (273 aa). 3 N-linked (GlcNAc...) asparagine glycosylation sites follow: N758, N870, and N887.

It belongs to the peptidase M28 family. Zn(2+) serves as cofactor.

The protein localises to the vacuole membrane. Its function is as follows. May be involved in vacuolar sorting and osmoregulation. The chain is Vacuolar membrane protease from Scheffersomyces stipitis (strain ATCC 58785 / CBS 6054 / NBRC 10063 / NRRL Y-11545) (Yeast).